The chain runs to 1755 residues: E3 ubiquitin-protein ligase UBR2 (1755 aa).

Ala-2 carries the N-acetylalanine modification. Lys-94 participates in a covalent cross-link: Glycyl lysine isopeptide (Lys-Gly) (interchain with G-Cter in ubiquitin). The segment at 97-168 (HLCGRVFKVG…EGPYCQKHKL (72 aa)) adopts a UBR-type zinc-finger fold. The Zn(2+) site is built by Cys-99, Cys-112, Cys-115, Cys-124, Cys-127, His-133, and His-136. A peptide is bound at residue Phe-148. Cys-149 is a binding site for Zn(2+). Asp-150 serves as a coordination point for a peptide. Cys-151 serves as a coordination point for Zn(2+). Asp-153 serves as a coordination point for a peptide. A Glycyl lysine isopeptide (Lys-Gly) (interchain with G-Cter in ubiquitin) cross-link involves residue Lys-158. Cys-163 is a binding site for Zn(2+). A Glycyl lysine isopeptide (Lys-Gly) (interchain with G-Cter in ubiquitin) cross-link involves residue Lys-165. Residue His-166 coordinates Zn(2+). Residues Lys-248, Lys-255, and Lys-470 each participate in a glycyl lysine isopeptide (Lys-Gly) (interchain with G-Cter in ubiquitin) cross-link. Position 476 is a phosphoserine (Ser-476). Glycyl lysine isopeptide (Lys-Gly) (interchain with G-Cter in ubiquitin) cross-links involve residues Lys-488, Lys-568, Lys-779, and Lys-789. The disordered stretch occupies residues 1012–1033 (AEAEGTIMEESSRDKDKAERKR). A coiled-coil region spans residues 1019 to 1054 (MEESSRDKDKAERKRKAEIARLRREKIMAQMSEMQR). Positions 1021 to 1033 (ESSRDKDKAERKR) are enriched in basic and acidic residues. Positions 1108, 1111, 1168, 1170, 1173, 1176, 1210, and 1213 each coordinate Zn(2+). The RING-type; atypical zinc-finger motif lies at 1108–1214 (CILCQEEQEV…NGEFLCPLCE (107 aa)). Residues Lys-1496, Lys-1599, and Lys-1689 each participate in a glycyl lysine isopeptide (Lys-Gly) (interchain with G-Cter in ubiquitin) cross-link. At Ser-1694 the chain carries Phosphoserine. Tyr-1697 is modified (phosphotyrosine).

It belongs to the E3 ubiquitin-protein ligase UBR1-like family. As to quaternary structure, interacts with UBE2B; promotes the UBE2B-H2A interaction and the ubiquitination of histone H2A by UBE2B and UBR2. Interacts with RECQL4. Interacts with Tex19.1 and Tex19.2; does not lead to Tex19.1 degradation and stabilizes it. Interacts with L1RE1. Interacts with CASP8. Interacts with ATXN3. Interacts with UBE2O. In terms of processing, dephosphorylated by DUSP22 at Ser-1694 and Tyr-1697, leading to subsequent ubiquitination and proteasomal degradation. 'Lys-48'-linked ubiquitinated at Lys-94, Lys-779 and Lys-1599 following DUSP22-mediated dephosphorylation of Ser-1694 and Tyr-1697 which promotes UBR2 interaction with the SCF(FBW1A) E3 ubiquitin-protein ligase complex. In terms of tissue distribution, highly expressed in skeletal muscle. Also expressed in heart, kidney and testis. Expressed in acinar cells of the pancreas. In testes, expressed primarily in spermatocytes. Expressed in cerebellum.

The protein localises to the nucleus. Its subcellular location is the chromosome. It catalyses the reaction S-ubiquitinyl-[E2 ubiquitin-conjugating enzyme]-L-cysteine + [acceptor protein]-L-lysine = [E2 ubiquitin-conjugating enzyme]-L-cysteine + N(6)-ubiquitinyl-[acceptor protein]-L-lysine.. Its pathway is protein modification; protein ubiquitination. In terms of biological role, E3 ubiquitin-protein ligase which is a component of the N-end rule pathway. Recognizes and binds to proteins bearing specific N-terminal residues (N-degrons) that are destabilizing according to the N-end rule, leading to their ubiquitination and subsequent degradation. Recognizes both type-1 and type-2 N-degrons, containing positively charged amino acids (Arg, Lys and His) and bulky and hydrophobic amino acids, respectively. Does not ubiquitinate proteins that are acetylated at the N-terminus. In contrast, it strongly binds methylated N-degrons. Plays a critical role in chromatin inactivation and chromosome-wide transcriptional silencing during meiosis via ubiquitination of histone H2A. Binds leucine and is a negative regulator of the leucine-mTOR signaling pathway, thereby controlling cell growth. Required for spermatogenesis, promotes, with Tex19.1, SPO11-dependent recombination foci to accumulate and drive robust homologous chromosome synapsis. Polyubiquitinates LINE-1 retrotransposon encoded, LIRE1, which induces degradation, inhibiting LINE-1 retrotransposon mobilization. Catalyzes ubiquitination and degradation of the N-terminal part of NLRP1B following NLRP1B activation by pathogens and other damage-associated signals: ubiquitination promotes degradation of the N-terminal part and subsequent release of the cleaved C-terminal part of NLRP1B, which polymerizes and forms the NLRP1B inflammasome followed by host cell pyroptosis. Plays a role in T-cell receptor signaling by inducing 'Lys-63'-linked ubiquitination of lymphocyte cell-specific kinase LCK. This activity is regulated by DUSP22, which induces 'Lys-48'-linked ubiquitination of UBR2, leading to its proteasomal degradation by SCF E3 ubiquitin-protein ligase complex. In Mus musculus (Mouse), this protein is E3 ubiquitin-protein ligase UBR2.